Here is a 101-residue protein sequence, read N- to C-terminus: Replication restart protein PriB (101 aa).

Residues 1 to 101 (MTTNSLVLSG…IHAENVELKT (101 aa)) enclose the SSB domain.

The protein belongs to the PriB family. Homodimer. Interacts with PriA and DnaT. Component of the replication restart primosome. Primosome assembly occurs via a 'hand-off' mechanism. PriA binds to replication forks, subsequently PriB then DnaT bind; DnaT then displaces ssDNA to generate the helicase loading substrate.

Its function is as follows. Involved in the restart of stalled replication forks, which reloads the replicative helicase on sites other than the origin of replication; the PriA-PriB pathway is the major replication restart pathway. During primosome assembly it facilitates complex formation between PriA and DnaT on DNA; stabilizes PriA on DNA. Stimulates the DNA unwinding activity of PriA helicase. This is Replication restart protein PriB from Shewanella putrefaciens (strain CN-32 / ATCC BAA-453).